Consider the following 177-residue polypeptide: Large ribosomal subunit protein uL10 (177 aa).

Belongs to the universal ribosomal protein uL10 family. Part of the ribosomal stalk of the 50S ribosomal subunit. The N-terminus interacts with L11 and the large rRNA to form the base of the stalk. The C-terminus forms an elongated spine to which L12 dimers bind in a sequential fashion forming a multimeric L10(L12)X complex.

In terms of biological role, forms part of the ribosomal stalk, playing a central role in the interaction of the ribosome with GTP-bound translation factors. This is Large ribosomal subunit protein uL10 from Thermoanaerobacter sp. (strain X514).